The sequence spans 95 residues: Signal recognition particle 19 kDa protein (95 aa).

The protein belongs to the SRP19 family. In terms of assembly, part of the signal recognition particle protein translocation system, which is composed of SRP and FtsY. Archaeal SRP consists of a 7S RNA molecule of 300 nucleotides and two protein subunits: SRP54 and SRP19.

The protein localises to the cytoplasm. Its function is as follows. Involved in targeting and insertion of nascent membrane proteins into the cytoplasmic membrane. Binds directly to 7S RNA and mediates binding of the 54 kDa subunit of the SRP. The protein is Signal recognition particle 19 kDa protein of Desulfurococcus amylolyticus (strain DSM 18924 / JCM 16383 / VKM B-2413 / 1221n) (Desulfurococcus kamchatkensis).